Consider the following 394-residue polypeptide: Chaperone protein DnaJ (394 aa).

Positions 4 to 68 (DYYEILGVSR…ELRARYDRFG (65 aa)) constitute a J domain. Residues 136–218 (GGEKQIRISH…CNGEGLAQTT (83 aa)) form a CR-type zinc finger. Zn(2+)-binding residues include Cys-149, Cys-152, Cys-166, Cys-169, Cys-192, Cys-195, Cys-206, and Cys-209. 4 CXXCXGXG motif repeats span residues 149-156 (CPVCGGSG), 166-173 (CPTCGGAG), 192-199 (CPTCGGAG), and 206-213 (CYNCNGEG).

The protein belongs to the DnaJ family. In terms of assembly, homodimer. It depends on Zn(2+) as a cofactor.

It localises to the cytoplasm. Participates actively in the response to hyperosmotic and heat shock by preventing the aggregation of stress-denatured proteins and by disaggregating proteins, also in an autonomous, DnaK-independent fashion. Unfolded proteins bind initially to DnaJ; upon interaction with the DnaJ-bound protein, DnaK hydrolyzes its bound ATP, resulting in the formation of a stable complex. GrpE releases ADP from DnaK; ATP binding to DnaK triggers the release of the substrate protein, thus completing the reaction cycle. Several rounds of ATP-dependent interactions between DnaJ, DnaK and GrpE are required for fully efficient folding. Also involved, together with DnaK and GrpE, in the DNA replication of plasmids through activation of initiation proteins. The chain is Chaperone protein DnaJ from Synechococcus sp. (strain JA-3-3Ab) (Cyanobacteria bacterium Yellowstone A-Prime).